A 125-amino-acid polypeptide reads, in one-letter code: Morphine 6-dehydrogenase (125 aa).

NADP(+) contacts are provided by residues 9–18 (GHSIPVLGFI) and 74–111 (SALG…IERE).

Belongs to the aldo/keto reductase family. As to quaternary structure, monomer. In terms of processing, the N-terminus is blocked.

It localises to the cytoplasm. It carries out the reaction morphine + NAD(+) = morphinone + NADH + H(+). The catalysed reaction is morphine + NADP(+) = morphinone + NADPH + H(+). Strongly inhibited by sulfhydryl reagents and quercetin, but not by pyrazole, barbital and indomethacine. In terms of biological role, catalyzes the dehydrogenation of morphine to morphinone. Uses both NAD and NADP, but the activity is much greater with NAD than with NADP. The chain is Morphine 6-dehydrogenase from Oryctolagus cuniculus (Rabbit).